Here is a 212-residue protein sequence, read N- to C-terminus: Large ribosomal subunit protein uL3 (212 aa).

Residues 130–158 are disordered; the sequence is KRGSMTHGSKNHRLPGSTGAGTTPGRVYP.

This sequence belongs to the universal ribosomal protein uL3 family. As to quaternary structure, part of the 50S ribosomal subunit. Forms a cluster with proteins L14 and L19.

Functionally, one of the primary rRNA binding proteins, it binds directly near the 3'-end of the 23S rRNA, where it nucleates assembly of the 50S subunit. This is Large ribosomal subunit protein uL3 from Gloeothece citriformis (strain PCC 7424) (Cyanothece sp. (strain PCC 7424)).